The following is a 37-amino-acid chain: Large ribosomal subunit protein bL36c (37 aa).

The protein belongs to the bacterial ribosomal protein bL36 family.

It is found in the plastid. The protein resides in the chloroplast. This chain is Large ribosomal subunit protein bL36c, found in Cryptomeria japonica (Japanese cedar).